Here is a 290-residue protein sequence, read N- to C-terminus: MAGKEIYHKMKDKVKDAFSSSGPETGKGKTKLSGKRVKHGYHLVKGKSNHPMEDYLVAEYRQEGEHDLGLFAIFDGHLGHTVPDFLRSHLFDNILKQPEFLSNPQAAIRNAYQLTDAKILESAAELGRGGSTAVTAILISSENSVNLVVANVGDSRAVISKSGVAKQLSVDHEPNKERHSIEKKGGFVSNLPGDVPRVDGQLAVARAFGDRSLKKHLSSEPDVVEEPIDENTDFLILASDGLWKVMSNQEAVDEIKDFKDAQAAAKHLTEQAVNRKSKDDISCIVVKFLC.

The PPM-type phosphatase domain maps to 38-288; that stretch reads KHGYHLVKGK…DDISCIVVKF (251 aa). Residues D75, G76, D240, and D279 each coordinate Mn(2+).

Belongs to the PP2C family. Mg(2+) serves as cofactor. Mn(2+) is required as a cofactor.

It catalyses the reaction O-phospho-L-seryl-[protein] + H2O = L-seryl-[protein] + phosphate. It carries out the reaction O-phospho-L-threonyl-[protein] + H2O = L-threonyl-[protein] + phosphate. This Oryza sativa subsp. japonica (Rice) protein is Probable protein phosphatase 2C 62.